The chain runs to 146 residues: Hemoglobin subunit beta (146 aa).

At Val-1 the chain carries N-acetylvaline. The Globin domain maps to 2 to 146; sequence HLTDAEKAAV…VATALAHKYH (145 aa). Ser-44 is subject to Phosphoserine. Lys-59 is subject to N6-acetyllysine. His-63 contributes to the heme b binding site. Lys-82 bears the N6-acetyllysine mark. His-92 lines the heme b pocket. S-nitrosocysteine is present on Cys-93. The residue at position 144 (Lys-144) is an N6-acetyllysine.

Belongs to the globin family. Heterotetramer of two alpha chains and two beta chains. In terms of tissue distribution, red blood cells.

Functionally, involved in oxygen transport from the lung to the various peripheral tissues. This is Hemoglobin subunit beta (HBB) from Spalax ehrenbergi (Middle East blind mole rat).